Consider the following 630-residue polypeptide: MMGIQILPPQLANQIAAGEVVERPASVVKELVENSLDAGASRVDIEIDKGGSKLIKIRDNGSGIPKDELALALSRHATSKLHTLDDLEAILSFGFRGEALASISSVSRLTLTSRTADQTEAWQAHAEGADMAVKVMPAAHPVGSTIEVVDLFFNTPARRRFLKSDKTEFTHIDEWLKRIALVRGDIHFTLTHNGKTVRNYRPAMNEAQYLQRLTQVSGRPFAEQALKIECQHDDLRLSGYLQSPWSPVITDTHYFYVNGRLIRDRLVNHAVRQAFAQKAELEQPGYVLMLDIDPHQVDVNVHPAKHEVRFHQSRYVHDYILQALQSALEEAGELNVVHSSSLDEVEDVFVDSPTSAVGIAAPFALGADTLESAQPLVASAAVQVKSAGAGREGASFGTQTNAFGSMATSRDSSRGSYSASESRQRTELPSKAAIASYGALLQTPAYSVKNHDYQPSLPMPAILDSQYWVMATADKLSLLPIKSVALATRCQEIEAKLATGLIGQPLLMPVSVAADADWQAVLDEHDTLIRQLGLELTIRYQQLIIKKVPPYIRESQLAKVIPEWLQSLRFETPAPSALAFWLAKHSLTGFVSAPEIWAAFSQLAEEKKQLIANKAILLPWQSWLEEQASE.

Over residues 398-408 the composition is skewed to polar residues; it reads TQTNAFGSMAT. The disordered stretch occupies residues 398-425; it reads TQTNAFGSMATSRDSSRGSYSASESRQR.

This sequence belongs to the DNA mismatch repair MutL/HexB family.

This protein is involved in the repair of mismatches in DNA. It is required for dam-dependent methyl-directed DNA mismatch repair. May act as a 'molecular matchmaker', a protein that promotes the formation of a stable complex between two or more DNA-binding proteins in an ATP-dependent manner without itself being part of a final effector complex. The polypeptide is DNA mismatch repair protein MutL (Shewanella baltica (strain OS185)).